The chain runs to 136 residues: Small ribosomal subunit protein uS11c (136 aa).

Belongs to the universal ribosomal protein uS11 family. In terms of assembly, part of the 30S ribosomal subunit.

The protein localises to the plastid. The protein resides in the chloroplast. The protein is Small ribosomal subunit protein uS11c of Guizotia abyssinica (Niger).